The sequence spans 636 residues: Threonine--tRNA ligase (636 aa).

In terms of domain architecture, TGS spans 1-61 (MPVITLPDGS…TQDASLQLIT (61 aa)). The catalytic stretch occupies residues 243-534 (DHRKIGKTLD…LIEEFTGKFP (292 aa)). Zn(2+) contacts are provided by Cys334, His385, and His511.

Belongs to the class-II aminoacyl-tRNA synthetase family. As to quaternary structure, homodimer. Requires Zn(2+) as cofactor.

It localises to the cytoplasm. It catalyses the reaction tRNA(Thr) + L-threonine + ATP = L-threonyl-tRNA(Thr) + AMP + diphosphate + H(+). Its function is as follows. Catalyzes the attachment of threonine to tRNA(Thr) in a two-step reaction: L-threonine is first activated by ATP to form Thr-AMP and then transferred to the acceptor end of tRNA(Thr). Also edits incorrectly charged L-seryl-tRNA(Thr). The protein is Threonine--tRNA ligase of Colwellia psychrerythraea (strain 34H / ATCC BAA-681) (Vibrio psychroerythus).